The chain runs to 233 residues: uncharacterized protein (233 aa).

This sequence belongs to the asfivirus H233R family.

This is an uncharacterized protein from African swine fever virus (isolate Tick/South Africa/Pretoriuskop Pr4/1996) (ASFV).